We begin with the raw amino-acid sequence, 499 residues long: Pyruvate kinase 2 (499 aa).

Substrate is bound at residue R50. Residues N52, S54, D84, and T85 each contribute to the K(+) site. Residue 52-55 (NFSH) participates in ATP binding. R91 contacts ATP. E241 contributes to the Mg(2+) binding site. G264, D265, and T297 together coordinate substrate. Position 265 (D265) interacts with Mg(2+).

It belongs to the pyruvate kinase family. As to quaternary structure, homotetramer. It depends on Mg(2+) as a cofactor. Requires K(+) as cofactor.

The catalysed reaction is pyruvate + ATP = phosphoenolpyruvate + ADP + H(+). The protein operates within carbohydrate degradation; glycolysis; pyruvate from D-glyceraldehyde 3-phosphate: step 5/5. Activated by fructose 2,6-bisphosphate, activated by the effector in a cooperative manner. The sequence is that of Pyruvate kinase 2 (PYK2) from Trypanosoma brucei brucei.